A 1093-amino-acid chain; its full sequence is MTVNGHHTNGVNGANGTNGHANGSNGINDTKAVKEIVPFVKPQVNFASAQRLEGCIHSLPELVDFNSLNNQHHTFCVQAKSSEPFDTITHGEFKVAVSKCAAWLKENLPIRPSSDDKALTKMAPVALFMESDIGLVIHEFALMSIGVPPLVLSPRLSPVAINALLEATGAASFIVSPRMSEPLKGALAALAAKGVSTHIGNPYKAYYQPGADPKSVAPFEVPQNPEDVILLLHSSGTTGLPKPIPTTHRQLLFAVNCHKFDTEEQAQSLNLSTLPLFHGFGLVAPGLSMSAGKPTLYPASDGIPNAKSIVDLINKTNAKSMMTVPFLLDDITNLPNEEGIKALVHMDFVGTGGAALGAGIGDRLAKGGVKLLNFYGTTETGPLSLTFAPTDNYDWKYFRLRTDCEYKIDELEPRDGERRFRLTVYPYGSEGFEISDQLIRNEQYPETDFAAVGRDDDVIVLATGEKANPLILETKLTEAPMVKAAIAFGENQFNLGVIVEPAEPLTPDTESAFRESIWPIITAACDQMDAFSRIPSPDAVVLVPAGVVIPRTDKGSIARKETYALFDKQIKGVYEQLLKAAADAVEPLDLDNLEQNLKSLIQEHLHIQAPASDWGVEDSLFDIGVDSLQVLQLRRILVTAASKTEAFKDTDCEKMIPPEFVYMNPSIREIAAALTKGSDGGDVSLEDAAKEVVELAETYSLKGVSAQEKAPSSSEGAFVMLTGATGSLGSHVAADLARRDNVAKVVCLVRKDKGTNQPPMPGGNPFDKKILKARGIQLTDEQFGKLATLEVDPTADKLGLIPMAYGMMQAKVTHVIHAAWPMNYLIRLRNFQYQFKFLRNLLEFASQGPAPTKKRFVFISSIATVARIGLAQPGSISEAPVSPSDSACGIGYADGKLVCEKIMEKAAQDYGGQLDVTSVRCGQMTGSKKTGVWNSNEQIPMLLKSAQGLGSLPQLSGELSWIPVDDAASTVSEIAFSDGSMPIVQHLENPIRQSWDAMLQSFGRELGLPAGKVPFGEWLDQVAAADGDDETFPVKKLTFFFKSFFQSVACGQVVLDTTVSRGQSKTLNAMTAVGDETVKAYADYWKSTGYLSK.

Over residues 1-26 (MTVNGHHTNGVNGANGTNGHANGSNG) the composition is skewed to low complexity. The tract at residues 1–27 (MTVNGHHTNGVNGANGTNGHANGSNGI) is disordered. Positions 35 to 392 (EIVPFVKPQV…LSLTFAPTDN (358 aa)) are adenylation (A) domain. The 88-residue stretch at 591–678 (DNLEQNLKSL…EIAAALTKGS (88 aa)) folds into the Carrier domain. The residue at position 627 (Ser-627) is an O-(pantetheine 4'-phosphoryl)serine. The thioester reductase (TR) domain stretch occupies residues 721 to 971 (LTGATGSLGS…IPVDDAASTV (251 aa)).

This sequence belongs to the NRP synthetase family.

It catalyses the reaction ilicicolinate B + AH2 + ATP = ilicicolin B + A + AMP + diphosphate. The protein operates within secondary metabolite biosynthesis; terpenoid biosynthesis. Functionally, non-canonical non-ribosomal peptide synthetase; part of the asc-1 gene cluster that mediates the biosynthesis of both ascochlorin and ascofuranone, a strong inhibitor of cyanide-insensitive alternative oxidases and a promising drug candidate against African trypanosomiasis. The first step in the pathway is performed by the non-reducing polyketide synthase ascC that produces orsellinic acid by condensing acetyl-CoA with 3 malonyl-CoA units. Orsellinic acid is then prenylated by the prenyltransferase ascA to yield ilicicolinic acid B. Ilicicolinic acid B is further reduced to ilicicolin B by the reductase ascB. The halogenase ascD then chlorinates ilicicolin B to produce ilicicolin A which is converted to ilicicolin A epoxide by the cytochrome P450 monooxygenase ascE that catalyzes stereoselective epoxidation of the terminal double bond of the prenyl group. Ilicicolin A epoxide is the last common precursor for the biosynthesis of ascofuranone and ascochlorin. The terpene cyclase ascF produces a monocyclic terpene, and the cyclization reaction is proposed to be initiated by protonation of the terminal epoxide of ilicicolin A epoxide to generate a monocyclic tertiarycation, which is followed by a series of hydride and methyl shifts with abstraction of proton, leading to the formation of the (14S,15R,19R)-trimethylcyclohexanone ring structure of ilicicolin C, which is finally reduced to ascochlorin by the dehydrogenase ascG. On the other hand, ilicicolin A epoxide is hydroxylated by the cytochrome P450 monooxygenase ascH, and the resultant product is cyclized by the terpene cyclase ascI to ascofuranol via protonation-initiated epoxide ring opening, which facilitates the 6-endo-tet cyclization to form the tetrahy-drofuran ring. Finally, ascofuranol is oxidized into ascofuranone by ascJ. This is Non-canonical non-ribosomal peptide synthetase ascB from Acremonium egyptiacum (Oospora egyptiaca).